We begin with the raw amino-acid sequence, 197 residues long: MTDQKLAKAKVIFVLGGPGSGKGTQCEKLVQKFHFNHLSSGDLLRAEVQSGSPKGKELKAMMERGELVPLEVVLALLKEAMINWLTKIVISLSIRYPRELDQGIKFEKEVCPCLCVINFDVSEEVMRKRLLKRAETSNRVDDNEETIVKRFRTFNELTKPVIEHYKQQNKVITIDASGTVDAIFDKVNHELQKFGVK.

Residue 19–24 (GSGKGT) coordinates ATP. Positions 39–68 (SSGDLLRAEVQSGSPKGKELKAMMERGELV) are NMP. Residues serine 40, arginine 45, 66 to 68 (ELV), 95 to 98 (RYPR), and glutamine 102 contribute to the AMP site. Residues 132 to 142 (KRAETSNRVDD) form an LID region. Residue arginine 133 participates in ATP binding. Residues arginine 139 and arginine 150 each coordinate AMP. Residue glycine 178 participates in ATP binding.

The protein belongs to the adenylate kinase family. Monomer.

It localises to the cytoplasm. It catalyses the reaction AMP + ATP = 2 ADP. In terms of biological role, catalyzes the reversible transfer of the terminal phosphate group between ATP and AMP. Plays an important role in cellular energy homeostasis and in adenine nucleotide metabolism. This Schistosoma mansoni (Blood fluke) protein is Adenylate kinase.